The sequence spans 353 residues: Photosystem II D2 protein (353 aa).

Residue Thr2 is modified to N-acetylthreonine. The residue at position 2 (Thr2) is a Phosphothreonine. Residues 41–61 (CAYFALGGWFTGTTFVTSWYT) form a helical membrane-spanning segment. Position 118 (His118) interacts with chlorophyll a. A helical transmembrane segment spans residues 125-141 (GFMLRQFELARSVQLRP). 2 residues coordinate pheophytin a: Gln130 and Asn143. Residues 153–166 (VFVSVFLIYPLGQS) form a helical membrane-spanning segment. Residue His198 participates in chlorophyll a binding. Residues 208-228 (AALLCAIHGATVENTLFEDGD) form a helical membrane-spanning segment. 2 residues coordinate a plastoquinone: His215 and Phe262. Fe cation is bound at residue His215. His269 serves as a coordination point for Fe cation. Residues 279 to 295 (GLWMSALGVVGLALNLR) form a helical membrane-spanning segment.

The protein belongs to the reaction center PufL/M/PsbA/D family. As to quaternary structure, PSII is composed of 1 copy each of membrane proteins PsbA, PsbB, PsbC, PsbD, PsbE, PsbF, PsbH, PsbI, PsbJ, PsbK, PsbL, PsbM, PsbT, PsbX, PsbY, PsbZ, Psb30/Ycf12, at least 3 peripheral proteins of the oxygen-evolving complex and a large number of cofactors. It forms dimeric complexes. The D1/D2 heterodimer binds P680, chlorophylls that are the primary electron donor of PSII, and subsequent electron acceptors. It shares a non-heme iron and each subunit binds pheophytin, quinone, additional chlorophylls, carotenoids and lipids. There is also a Cl(-1) ion associated with D1 and D2, which is required for oxygen evolution. The PSII complex binds additional chlorophylls, carotenoids and specific lipids. serves as cofactor.

Its subcellular location is the plastid. The protein localises to the chloroplast thylakoid membrane. It carries out the reaction 2 a plastoquinone + 4 hnu + 2 H2O = 2 a plastoquinol + O2. Its function is as follows. Photosystem II (PSII) is a light-driven water:plastoquinone oxidoreductase that uses light energy to abstract electrons from H(2)O, generating O(2) and a proton gradient subsequently used for ATP formation. It consists of a core antenna complex that captures photons, and an electron transfer chain that converts photonic excitation into a charge separation. The D1/D2 (PsbA/PsbD) reaction center heterodimer binds P680, the primary electron donor of PSII as well as several subsequent electron acceptors. D2 is needed for assembly of a stable PSII complex. The polypeptide is Photosystem II D2 protein (Lemna minor (Common duckweed)).